We begin with the raw amino-acid sequence, 274 residues long: Large ribosomal subunit protein uL2 (274 aa).

The interval 223-274 (VAMNPVDHPHGGGEGRTGEGRHAVDPWGNLTKGYRTRNNKRTQSMIVSRRKK) is disordered. Over residues 229 to 246 (DHPHGGGEGRTGEGRHAV) the composition is skewed to basic and acidic residues.

Belongs to the universal ribosomal protein uL2 family. Part of the 50S ribosomal subunit. Forms a bridge to the 30S subunit in the 70S ribosome.

Functionally, one of the primary rRNA binding proteins. Required for association of the 30S and 50S subunits to form the 70S ribosome, for tRNA binding and peptide bond formation. It has been suggested to have peptidyltransferase activity; this is somewhat controversial. Makes several contacts with the 16S rRNA in the 70S ribosome. The polypeptide is Large ribosomal subunit protein uL2 (Verminephrobacter eiseniae (strain EF01-2)).